Here is a 334-residue protein sequence, read N- to C-terminus: Holliday junction branch migration complex subunit RuvB (334 aa).

The interval 4–184 (ADRLISAAVI…FGIVQRLEFY (181 aa)) is large ATPase domain (RuvB-L). ATP is bound by residues isoleucine 23, arginine 24, glycine 65, lysine 68, threonine 69, threonine 70, 131–133 (EDY), arginine 174, tyrosine 184, and arginine 221. Threonine 69 contributes to the Mg(2+) binding site. The segment at 185–255 (PVADLEHIVS…VAMKALDMLN (71 aa)) is small ATPAse domain (RuvB-S). Residues 258 to 334 (AEGFDFMDRK…YKHFGITREE (77 aa)) are head domain (RuvB-H). Arginine 294, arginine 313, and arginine 318 together coordinate DNA.

It belongs to the RuvB family. In terms of assembly, homohexamer. Forms an RuvA(8)-RuvB(12)-Holliday junction (HJ) complex. HJ DNA is sandwiched between 2 RuvA tetramers; dsDNA enters through RuvA and exits via RuvB. An RuvB hexamer assembles on each DNA strand where it exits the tetramer. Each RuvB hexamer is contacted by two RuvA subunits (via domain III) on 2 adjacent RuvB subunits; this complex drives branch migration. In the full resolvosome a probable DNA-RuvA(4)-RuvB(12)-RuvC(2) complex forms which resolves the HJ.

It localises to the cytoplasm. The enzyme catalyses ATP + H2O = ADP + phosphate + H(+). Functionally, the RuvA-RuvB-RuvC complex processes Holliday junction (HJ) DNA during genetic recombination and DNA repair, while the RuvA-RuvB complex plays an important role in the rescue of blocked DNA replication forks via replication fork reversal (RFR). RuvA specifically binds to HJ cruciform DNA, conferring on it an open structure. The RuvB hexamer acts as an ATP-dependent pump, pulling dsDNA into and through the RuvAB complex. RuvB forms 2 homohexamers on either side of HJ DNA bound by 1 or 2 RuvA tetramers; 4 subunits per hexamer contact DNA at a time. Coordinated motions by a converter formed by DNA-disengaged RuvB subunits stimulates ATP hydrolysis and nucleotide exchange. Immobilization of the converter enables RuvB to convert the ATP-contained energy into a lever motion, pulling 2 nucleotides of DNA out of the RuvA tetramer per ATP hydrolyzed, thus driving DNA branch migration. The RuvB motors rotate together with the DNA substrate, which together with the progressing nucleotide cycle form the mechanistic basis for DNA recombination by continuous HJ branch migration. Branch migration allows RuvC to scan DNA until it finds its consensus sequence, where it cleaves and resolves cruciform DNA. In Yersinia pestis bv. Antiqua (strain Angola), this protein is Holliday junction branch migration complex subunit RuvB.